The primary structure comprises 70 residues: Omega-conotoxin-like Bu1 (70 aa).

The N-terminal stretch at 1-22 (MKLTCVAIVAVLLLTACQLITA) is a signal peptide. Positions 23–45 (EDSRGTQLHRALRKTTKLSVSTR) are excised as a propeptide. 3 cysteine pairs are disulfide-bonded: Cys-46–Cys-61, Cys-53–Cys-65, and Cys-60–Cys-70.

It belongs to the conotoxin O1 superfamily. As to expression, expressed by the venom duct.

It is found in the secreted. Omega-conotoxins act at presynaptic membranes, they bind and block voltage-gated calcium channels (Cav). This Conus bullatus (Bubble cone) protein is Omega-conotoxin-like Bu1.